A 206-amino-acid polypeptide reads, in one-letter code: RNA pyrophosphohydrolase (206 aa).

One can recognise a Nudix hydrolase domain in the interval 6-150; that stretch reads GYRPNVGIVI…KRDVYRKVMK (145 aa). The Nudix box motif lies at 38 to 59; it reads GGINEGENIETAMYRELYEEVG. A compositionally biased stretch (basic and acidic residues) spans 162 to 191; the sequence is KPETVEKPRVERTEKRDFQKRDNQKREFRK. The tract at residues 162 to 206 is disordered; the sequence is KPETVEKPRVERTEKRDFQKRDNQKREFRKSARTWNNSHQKGKAQ.

The protein belongs to the Nudix hydrolase family. RppH subfamily. A divalent metal cation serves as cofactor.

Accelerates the degradation of transcripts by removing pyrophosphate from the 5'-end of triphosphorylated RNA, leading to a more labile monophosphorylated state that can stimulate subsequent ribonuclease cleavage. In Actinobacillus pleuropneumoniae serotype 3 (strain JL03), this protein is RNA pyrophosphohydrolase.